Here is a 1051-residue protein sequence, read N- to C-terminus: Integrin alpha-3 (1051 aa).

The signal sequence occupies residues 1 to 32 (MGPGPRCAPGDPGWMLGALALMVAASGRFAFA). At 33-991 (FNLDTRFLVV…LVEELPAEIE (959 aa)) the chain is on the extracellular side. FG-GAP repeat units follow at residues 38-103 (RFLV…KDDC), 110-171 (EKSD…DLQL), 185-235 (CNSN…WDLS), 236-292 (EYSY…GGDL), 293-354 (KRKQ…TSFP), 356-411 (QPSL…GLLR), and 415-477 (QIVH…VARP). An N-linked (GlcNAc...) asparagine glycan is attached at Asn86. Intrachain disulfides connect Cys94–Cys103, Cys140–Cys162, and Cys185–Cys197. Positions 315, 317, 319, 323, 378, 380, 382, 386, 439, 441, 443, 445, and 447 each coordinate Ca(2+). Cystine bridges form between Cys485-Cys490 and Cys496-Cys550. 4 N-linked (GlcNAc...) asparagine glycosylation sites follow: Asn500, Asn511, Asn573, and Asn605. Cys615 and Cys621 form a disulfide bridge. N-linked (GlcNAc...) asparagine glycans are attached at residues Asn656, Asn697, and Asn841. A disulfide bridge connects residues Cys694 and Cys702. Cystine bridges form between Cys846/Cys904 and Cys911/Cys916. The disordered stretch occupies residues 860–888 (LSDPGDKPHSPQRRRRQLDPGGDQGSPPV). N-linked (GlcNAc...) asparagine glycosylation is found at Asn923, Asn926, Asn935, and Asn969. The chain crosses the membrane as a helical span at residues 992-1019 (LWLVLVAVSAGLLLLGLIIILLWKCGFF). The GFFKR motif motif lies at 1017–1021 (GFFKR). Residues 1020 to 1051 (KRARTRALYEAKRQKAEMKSQPSETERLTDDY) are Cytoplasmic-facing.

It belongs to the integrin alpha chain family. In terms of assembly, heterodimer of an alpha and a beta subunit. The alpha subunit is composed of a heavy and a light chain linked by a disulfide bond. Alpha-3 associates with beta-1. Interacts with HPS5. Interacts with FAP (seprase); the interaction occurs at the cell surface of invadopodia membrane in a collagen-dependent manner. Post-translationally, isoform 1, but not isoform 2, is phosphorylated on serine residues.

Its subcellular location is the cell membrane. The protein resides in the cell projection. It is found in the invadopodium membrane. It localises to the filopodium membrane. Integrin alpha-3/beta-1 is a receptor for fibronectin, laminin, collagen, epiligrin, thrombospondin and CSPG4. Integrin alpha-3/beta-1 provides a docking site for FAP (seprase) at invadopodia plasma membranes in a collagen-dependent manner and hence may participate in the adhesion, formation of invadopodia and matrix degradation processes, promoting cell invasion. Alpha-3/beta-1 may mediate with LGALS3 the stimulation by CSPG4 of endothelial cells migration. In Cricetulus griseus (Chinese hamster), this protein is Integrin alpha-3 (ITGA3).